A 478-amino-acid polypeptide reads, in one-letter code: Adenosylhomocysteinase (478 aa).

Positions 67, 144, and 204 each coordinate substrate. Residue 205–207 coordinates NAD(+); sequence TTT. Substrate is bound by residues Lys-234 and Asp-238. NAD(+)-binding positions include Asn-239, 268 to 273, Glu-291, Asn-326, 347 to 349, and Asn-392; these read GYGDVG and IGH.

Belongs to the adenosylhomocysteinase family. The cofactor is NAD(+).

It is found in the cytoplasm. The enzyme catalyses S-adenosyl-L-homocysteine + H2O = L-homocysteine + adenosine. It participates in amino-acid biosynthesis; L-homocysteine biosynthesis; L-homocysteine from S-adenosyl-L-homocysteine: step 1/1. May play a key role in the regulation of the intracellular concentration of adenosylhomocysteine. This Nitrosomonas europaea (strain ATCC 19718 / CIP 103999 / KCTC 2705 / NBRC 14298) protein is Adenosylhomocysteinase.